Reading from the N-terminus, the 179-residue chain is uncharacterized protein (179 aa).

The first 19 residues, 1-19 (MNTNVFRLLLLGSLFSLSA), serve as a signal peptide directing secretion. C20 is lipidated: N-palmitoyl cysteine. C20 carries the S-diacylglycerol cysteine lipid modification.

It is found in the cell membrane. This is an uncharacterized protein from Escherichia coli (strain K12).